Reading from the N-terminus, the 167-residue chain is Novel acetylcholine receptor chaperone (167 aa).

The Cytoplasmic portion of the chain corresponds to 1 to 5 (MASPR). Residues 6–26 (TITIMALSVALGLFFVFMGTI) traverse the membrane as a helical segment. Residues 27-61 (KLTPRLSKDAYSEMKRAYKSYVRALPLLKKMGINS) lie on the Lumenal side of the membrane. Residues 43 to 54 (AYKSYVRALPLL) are interaction with NGFR. A helical transmembrane segment spans residues 62 to 82 (ILLRKSIGALEVACGIVMTLV). Residues 83-88 (PGRPKD) are Cytoplasmic-facing. A helical membrane pass occupies residues 89 to 109 (VANFFLLLLVLAVLFFHQLVG). The Lumenal segment spans residues 110-114 (DPLKR). Residues 115–132 (YAHALVFGILLTCRLLIA) form a helical membrane-spanning segment. The Cytoplasmic segment spans residues 133–167 (RKPEDRSSEKKALPESAEEQPSLYEKAPQGKVKVS). Basic and acidic residues predominate over residues 135-145 (PEDRSSEKKAL). The segment at 135 to 167 (PEDRSSEKKALPESAEEQPSLYEKAPQGKVKVS) is disordered.

It belongs to the DoxX family. As to quaternary structure, may interact with NGFR. Interacts with RPN1, RPN2 and CANX. As to expression, brain (at protein level). Expressed in the spinal cord dorsal horn (at protein level).

The protein resides in the peroxisome membrane. Its subcellular location is the cytoplasmic vesicle. It is found in the endoplasmic reticulum membrane. Its function is as follows. Molecular chaperone which mediates the proper assembly and functional expression of the nicotinic acetylcholine receptors (nAChRs) throughout the brain. Essential for the proper folding, assembly, function and surface trafficking of alpha-7 (CHRNA7), alpha-4-beta-2, alpha-3-beta-2 and alpha-3-beta-4 receptors. Stably associates with ribophorin-1 (RPN1) and ribophorin-2 (RPN2) (components of the oligosaccharyl transferase (OST) complex) and with calnexin (CANX), both of which are critical for NACHO-mediated effects on CHRNA7 assembly and function. Facilitates the proper folding and assembly of alpha-6-beta-2 and alpha-6-beta-2-beta-3 receptors and acts at early stages of the nAChRs subunit assembly. Promotes the expression of the alpha-4(2):beta-2(3) stoichiometric form over the alpha-4(3):beta-2(2) form. This chain is Novel acetylcholine receptor chaperone, found in Mus musculus (Mouse).